The primary structure comprises 146 residues: MNTNYWIGVVSEQHVLKGAAGGFAQLCHGKKAPLAKMKEGDWLIYYSPRDAYPDGKLLRSFTAIGKVKSGNIYPYQMAPNFIPYRLDIDYYPCHKIGFYDIKSKLEFVQETKHLGFLFRRGHFEISKKDFLTIAQAMGVNISGMAL.

This sequence belongs to the UPF0310 family.

The polypeptide is UPF0310 protein YdcG (ydcG) (Bacillus subtilis (strain 168)).